The sequence spans 244 residues: Na(+)-translocating NADH-quinone reductase subunit E (244 aa).

Transmembrane regions (helical) follow at residues 11–31 (LLGI…TFLG), 50–70 (MSVA…HYFI), 90–110 (FLEL…LEVL), 123–143 (GIFL…LFGI), 153–173 (VVFS…FATI), and 191–211 (ISFI…GIDI). Over residues 222–236 (VTNIATDSPQPNTHS) the composition is skewed to polar residues. The segment at 222-244 (VTNIATDSPQPNTHSSSEEPKAS) is disordered.

This sequence belongs to the NqrDE/RnfAE family. Composed of six subunits; NqrA, NqrB, NqrC, NqrD, NqrE and NqrF.

The protein resides in the cell inner membrane. The enzyme catalyses a ubiquinone + n Na(+)(in) + NADH + H(+) = a ubiquinol + n Na(+)(out) + NAD(+). NQR complex catalyzes the reduction of ubiquinone-1 to ubiquinol by two successive reactions, coupled with the transport of Na(+) ions from the cytoplasm to the periplasm. NqrA to NqrE are probably involved in the second step, the conversion of ubisemiquinone to ubiquinol. The sequence is that of Na(+)-translocating NADH-quinone reductase subunit E from Chlamydia trachomatis serovar A (strain ATCC VR-571B / DSM 19440 / HAR-13).